A 2410-amino-acid polypeptide reads, in one-letter code: Dual specificity protein kinase splA (2410 aa).

Disordered stretches follow at residues 29 to 48 (NNNNNNNNNNNNNNNNNNNN), 66 to 103 (NHPSLKIPPPPSPTSPYVRRHARQHSRSNSSNSPGELT), 116 to 158 (NTQT…SNGG), 187 to 252 (NISP…SSGI), 508 to 647 (QQLQ…VPSA), and 659 to 820 (SSSS…KKEG). Composition is skewed to low complexity over residues 116–128 (NTQTSPPTSTSPN) and 137–158 (NTTTSSTTITRNSNNINNSNGG). A compositionally biased stretch (pro residues) spans 514 to 525 (QPPPTIQPPPQQ). The span at 530-544 (LRGNRSSGNLSGLNS) shows a compositional bias: low complexity. The span at 545-554 (FSLKQSTDSL) shows a compositional bias: polar residues. Over residues 560-583 (SQQSTVSSNSTPIAATPISPLTAP) the composition is skewed to low complexity. The segment covering 584-594 (TSPPPPPPPPT) has biased composition (pro residues). 6 stretches are compositionally biased toward low complexity: residues 595–618 (NFNSKFNNNNNNNINNSSNNNTTV), 627–639 (VLPKSPSSRSPRP), 659–686 (SSSSNISTNNTDLNLSSSSSSSPPLNIS), 701–738 (SPSYKQQQQQQQQQQQQQQQLNNSSNSSYSPKPRSPSV), 746–759 (ISPNSSPIGSPNIS), and 777–813 (NTNNNNNNNNNNNNNNNNNNNNNNNNNNNNNNNNNTN). 2 consecutive B30.2/SPRY domains span residues 822–1004 (SSWF…GPFS) and 1020–1209 (DSGG…PPFK). 2 disordered regions span residues 1228–1428 (PNGN…NNIY) and 1493–1512 (SLGVSFSSPSSSPKTSPRKI). Low complexity-rich tracts occupy residues 1229-1359 (NGNN…NNNI), 1373-1399 (SSTGSLGGNNSSGNNNSSSGSIGNNSS), 1419-1428 (SSTNNNNNIY), and 1493-1507 (SLGVSFSSPSSSPKT). The 223-residue stretch at 1481-1703 (PITASTNHTL…CVATFPGGHF (223 aa)) folds into the B30.2/SPRY 3 domain. An SAM domain is found at 1734–1798 (WAPNDVAIWL…INRLNRMIQI (65 aa)). Residues 1862–2105 (KSYTQKEIED…PPPPPQLPVR (244 aa)) form a disordered region. Basic and acidic residues predominate over residues 1865–1874 (TQKEIEDRNR). Positions 1951–1967 (SVSSTGGSSGFLTFPSS) are enriched in low complexity. Residues 1989-2002 (ITSNYKGITNTGQP) are compositionally biased toward polar residues. Residues 2020–2070 (SNNGNNGNNNNNNNNNNIKANQQQQQQSSYQQSQTQQQQQHITSTSTSTTN) show a composition bias toward low complexity. Positions 2089–2102 (PSRPPPPPPPPPQL) are enriched in pro residues. The region spanning 2115 to 2387 (LEFGQTIGKG…FKQIIVHLKE (273 aa)) is the Protein kinase domain. ATP contacts are provided by residues 2121 to 2129 (IGKGFFGEV) and K2142. D2243 (proton acceptor) is an active-site residue.

It belongs to the protein kinase superfamily. TKL Tyr protein kinase family. In terms of processing, tyrosine kinase domain is capable of autophosphorylation, in vitro; however it is also autophosphorylated on serine and threonine residues.

The catalysed reaction is L-tyrosyl-[protein] + ATP = O-phospho-L-tyrosyl-[protein] + ADP + H(+). Functionally, essential for spore differentiation. The sequence is that of Dual specificity protein kinase splA (splA) from Dictyostelium discoideum (Social amoeba).